Reading from the N-terminus, the 61-residue chain is MAKDYVTGKKTTFGNKRSHAMNSVRRAWKPNLQKVRILVDGKPKRVWVSTKALKSGKVTRA.

A disordered region spans residues 1 to 21; it reads MAKDYVTGKKTTFGNKRSHAM.

It belongs to the bacterial ribosomal protein bL28 family.

This chain is Large ribosomal subunit protein bL28, found in Lactobacillus helveticus (strain DPC 4571).